A 311-amino-acid chain; its full sequence is tRNA-cytidine(32) 2-sulfurtransferase (311 aa).

The PP-loop motif motif lies at 47-52 (SGGKDS). [4Fe-4S] cluster is bound by residues cysteine 122, cysteine 125, and cysteine 213.

It belongs to the TtcA family. As to quaternary structure, homodimer. It depends on Mg(2+) as a cofactor. [4Fe-4S] cluster is required as a cofactor.

It localises to the cytoplasm. The enzyme catalyses cytidine(32) in tRNA + S-sulfanyl-L-cysteinyl-[cysteine desulfurase] + AH2 + ATP = 2-thiocytidine(32) in tRNA + L-cysteinyl-[cysteine desulfurase] + A + AMP + diphosphate + H(+). The protein operates within tRNA modification. Catalyzes the ATP-dependent 2-thiolation of cytidine in position 32 of tRNA, to form 2-thiocytidine (s(2)C32). The sulfur atoms are provided by the cysteine/cysteine desulfurase (IscS) system. In Shigella dysenteriae serotype 1 (strain Sd197), this protein is tRNA-cytidine(32) 2-sulfurtransferase.